The following is a 310-amino-acid chain: Cytochrome f (310 aa).

Positions Met1–Ala27 are cleaved as a signal peptide. Heme contacts are provided by Tyr28, Cys48, Cys51, and His52. Residues Ile277–Lys297 form a helical membrane-spanning segment.

The protein belongs to the cytochrome f family. As to quaternary structure, the 4 large subunits of the cytochrome b6-f complex are cytochrome b6, subunit IV (17 kDa polypeptide, PetD), cytochrome f and the Rieske protein, while the 4 small subunits are PetG, PetL, PetM and PetN. The complex functions as a dimer. Heme serves as cofactor.

Its subcellular location is the cellular thylakoid membrane. Component of the cytochrome b6-f complex, which mediates electron transfer between photosystem II (PSII) and photosystem I (PSI), cyclic electron flow around PSI, and state transitions. This chain is Cytochrome f, found in Synechococcus sp. (strain WH7803).